We begin with the raw amino-acid sequence, 408 residues long: Multidrug resistance protein MdtG (408 aa).

11 helical membrane passes run 16–36 (LIVA…VMPF), 58–78 (IVFS…GGLA), 92–112 (LGMG…QFLI), 115–135 (ALLG…ATQV), 146–166 (TLST…GLLA), 173–193 (PVFF…LFCI), 224–244 (LFVT…ILTL), 256–276 (VAFI…LSAP), 290–310 (ILIT…YVQT), 319–339 (FLLG…LVYN), and 378–398 (AVFL…WNSL).

This sequence belongs to the major facilitator superfamily. DHA1 family. MdtG (TC 2.A.1.2.20) subfamily.

It localises to the cell inner membrane. Functionally, confers resistance to fosfomycin and deoxycholate. In Escherichia coli O81 (strain ED1a), this protein is Multidrug resistance protein MdtG.